A 595-amino-acid chain; its full sequence is Inactive serine/threonine-protein kinase PLK5 (595 aa).

Residues 27-279 enclose the Protein kinase domain; the sequence is YRRGKLIGKG…LDHLLQDDFF (253 aa). Residues 33 to 41 and K56 each bind ATP; that span reads IGKGAFSRC. Catalysis depends on D150, which acts as the Proton acceptor. The segment at 326-350 is disordered; sequence FTSKEASGPGEEGTEPDHMEAGNEE. Positions 340–350 are enriched in basic and acidic residues; sequence EPDHMEAGNEE. 2 consecutive POLO box domains span residues 413 to 491 and 509 to 595; these read WAPK…YMQR and DISL…LQSV.

Belongs to the protein kinase superfamily. Ser/Thr protein kinase family. CDC5/Polo subfamily. As to expression, expressed in the cerebellum, eye and brain cortex (at protein level). Expressed in highly differentiated tissues, such as brain, eyes and ovary. Not detectable in proliferating tissues, such as the colon, spleen and placenta.

Its subcellular location is the nucleus. The protein resides in the nucleolus. It is found in the cytoplasm. Its function is as follows. Inactive serine/threonine-protein kinase that plays a role in cell cycle progression and neuronal differentiation. The chain is Inactive serine/threonine-protein kinase PLK5 from Mus musculus (Mouse).